A 262-amino-acid chain; its full sequence is Spindlin-W (262 aa).

The disordered stretch occupies residues 1–49; it reads MKTPFGKSPAQRSRADAGHTRVSASMMKKRTSHKKHRNNVGPSKPISQP. Residues 27–38 are compositionally biased toward basic residues; that stretch reads MKKRTSHKKHRN.

This sequence belongs to the SPIN/STSY family. Expressed predominantly in ovarian granulosa and thecal cell.

It localises to the nucleus. In terms of biological role, may play a role in mitosis. This chain is Spindlin-W (SPINW), found in Gallus gallus (Chicken).